We begin with the raw amino-acid sequence, 242 residues long: Probable transcriptional regulatory protein MHP7448_0474 (242 aa).

The protein belongs to the TACO1 family.

The protein resides in the cytoplasm. This Mesomycoplasma hyopneumoniae (strain 7448) (Mycoplasma hyopneumoniae) protein is Probable transcriptional regulatory protein MHP7448_0474.